The primary structure comprises 297 residues: MRVIFMGTPDFSVPALRAIAARHQVVAVYSQPPRAAGRGQKPRPSPVHRAAEELGLPVRTPERLKSPQDQGDFAALQADVAVVVAYGLILPQPVLEAPWLGCLNIHASLLPRWRGAAPIHRAIMAGDAETGVAIMQMEAGLDTGPVLAEARTTIGAEDTTADLHDRLAEMGAALIVETLHRLPLPAEPQPAEGVTYAQKIDKAEARIDWGRPAAQVDRQIRGLSPFPGAWCLIGGERVKLLRSRLAAGSGAPGRVLSGFTIACGEGAVEVLEAQREGKRPMPAAEILRGMALPDRLD.

The tract at residues 31-52 (QPPRAAGRGQKPRPSPVHRAAE) is disordered. 108–111 (SLLP) is a binding site for (6S)-5,6,7,8-tetrahydrofolate.

This sequence belongs to the Fmt family.

The enzyme catalyses L-methionyl-tRNA(fMet) + (6R)-10-formyltetrahydrofolate = N-formyl-L-methionyl-tRNA(fMet) + (6S)-5,6,7,8-tetrahydrofolate + H(+). In terms of biological role, attaches a formyl group to the free amino group of methionyl-tRNA(fMet). The formyl group appears to play a dual role in the initiator identity of N-formylmethionyl-tRNA by promoting its recognition by IF2 and preventing the misappropriation of this tRNA by the elongation apparatus. This Paracoccus denitrificans (strain Pd 1222) protein is Methionyl-tRNA formyltransferase.